The sequence spans 102 residues: ATP-dependent Clp protease adapter protein ClpS (102 aa).

Belongs to the ClpS family. As to quaternary structure, binds to the N-terminal domain of the chaperone ClpA.

Its function is as follows. Involved in the modulation of the specificity of the ClpAP-mediated ATP-dependent protein degradation. This Shewanella halifaxensis (strain HAW-EB4) protein is ATP-dependent Clp protease adapter protein ClpS.